The chain runs to 166 residues: 3-isopropylmalate dehydratase small subunit 2 (166 aa).

The protein belongs to the LeuD family. LeuD type 2 subfamily. Heterodimer of LeuC and LeuD.

It catalyses the reaction (2R,3S)-3-isopropylmalate = (2S)-2-isopropylmalate. The protein operates within amino-acid biosynthesis; L-leucine biosynthesis; L-leucine from 3-methyl-2-oxobutanoate: step 2/4. In terms of biological role, catalyzes the isomerization between 2-isopropylmalate and 3-isopropylmalate, via the formation of 2-isopropylmaleate. The polypeptide is 3-isopropylmalate dehydratase small subunit 2 (leuD2) (Thermotoga maritima (strain ATCC 43589 / DSM 3109 / JCM 10099 / NBRC 100826 / MSB8)).